The chain runs to 545 residues: Threonine--tRNA ligase catalytic subunit (545 aa).

A catalytic region spans residues 139–433 (DHRLIGEKLD…LLEHFKGKLP (295 aa)). Positions 231, 282, and 410 each coordinate Zn(2+).

The protein belongs to the class-II aminoacyl-tRNA synthetase family. As to quaternary structure, homodimer. Probably interacts with its editing subunit. Zn(2+) is required as a cofactor.

The protein localises to the cytoplasm. It catalyses the reaction tRNA(Thr) + L-threonine + ATP = L-threonyl-tRNA(Thr) + AMP + diphosphate + H(+). Functionally, catalyzes the attachment of threonine to tRNA(Thr) in a two-step reaction: L-threonine is first activated by ATP to form Thr-AMP and then transferred to the acceptor end of tRNA(Thr). Also activates L-serine and transfers it to tRNA(Thr) but cannot deacylate incorrectly charged amino acid; unlike most archaea the editing function is found in a freestanding protein. This Saccharolobus islandicus (strain L.S.2.15 / Lassen #1) (Sulfolobus islandicus) protein is Threonine--tRNA ligase catalytic subunit.